The primary structure comprises 253 residues: tRNA pseudouridine synthase A (253 aa).

Asp-53 serves as the catalytic Nucleophile. Substrate is bound at residue Tyr-112.

Belongs to the tRNA pseudouridine synthase TruA family. As to quaternary structure, homodimer.

The enzyme catalyses uridine(38/39/40) in tRNA = pseudouridine(38/39/40) in tRNA. Functionally, formation of pseudouridine at positions 38, 39 and 40 in the anticodon stem and loop of transfer RNAs. The sequence is that of tRNA pseudouridine synthase A from Lactococcus lactis subsp. cremoris (strain MG1363).